Here is a 57-residue protein sequence, read N- to C-terminus: Large ribosomal subunit protein bL32 (57 aa).

The interval 1-23 is disordered; that stretch reads MAVPKKKTSKSKRDKRRATWRHK.

The protein belongs to the bacterial ribosomal protein bL32 family.

In Nostoc sp. (strain PCC 7120 / SAG 25.82 / UTEX 2576), this protein is Large ribosomal subunit protein bL32.